Here is a 250-residue protein sequence, read N- to C-terminus: Probable aquaporin TIP2-2 (250 aa).

At M1 the chain carries N-acetylmethionine. The Cytoplasmic segment spans residues 1-24 (MVKIEIGSVGDSFSVASLKAYLSE). K3 carries the N6,N6-dimethyllysine modification. Residues 25-45 (FIATLLFVFAGVGSALAFAKL) traverse the membrane as a helical segment. Residues 46 to 53 (TSDAALDP) are Vacuolar-facing. A helical transmembrane segment spans residues 54-74 (AGLVAVAVAHAFALFVGVSIA). Topologically, residues 75 to 101 (ANISGGHLNPAVTLGLAVGGNITVITG) are cytoplasmic. The short motif at 83–85 (NPA) is the NPA 1 element. The helical transmembrane segment at 102–122 (FFYWIAQCLGSIVACLLLVFV) threads the bilayer. At 123 to 133 (TNGESVPTHGV) the chain is on the vacuolar side. A helical membrane pass occupies residues 134–154 (AAGLGAIEGVVMEIVVTFALV). Topologically, residues 155 to 168 (YTVYATAADPKKGS) are cytoplasmic. Residues 169–189 (LGTIAPIAIGFIVGANILAAG) traverse the membrane as a helical segment. At 190–210 (PFSGGSMNPARSFGPAVVSGD) the chain is on the vacuolar side. Residues 197-199 (NPA) carry the NPA 2 motif. A helical membrane pass occupies residues 211-231 (FSQIWIYWVGPLVGGALAGLI). Residues 232 to 250 (YGDVFIGSYAPAPTTESYP) are Cytoplasmic-facing. A Phosphoserine modification is found at S248.

The protein belongs to the MIP/aquaporin (TC 1.A.8) family. TIP (TC 1.A.8.10) subfamily. As to quaternary structure, interacts with cucumber mosaic virus (CMV) Protein 1a. As to expression, expressed above groung and in roots.

It is found in the vacuole membrane. Its function is as follows. Aquaporins facilitate the transport of water and small neutral solutes across cell membranes. This is Probable aquaporin TIP2-2 (TIP2-2) from Arabidopsis thaliana (Mouse-ear cress).